Consider the following 208-residue polypeptide: V-type ATP synthase subunit D (208 aa).

This sequence belongs to the V-ATPase D subunit family.

Produces ATP from ADP in the presence of a proton gradient across the membrane. This chain is V-type ATP synthase subunit D, found in Chlamydia caviae (strain ATCC VR-813 / DSM 19441 / 03DC25 / GPIC) (Chlamydophila caviae).